The primary structure comprises 141 residues: Hemoglobin subunit alpha (141 aa).

The 141-residue stretch at 1-141 (VLSPDDKKHV…VSTVLTSKYR (141 aa)) folds into the Globin domain. Serine 3 is modified (phosphoserine). N6-succinyllysine is present on residues lysine 7 and lysine 11. Lysine 16 carries the post-translational modification N6-acetyllysine; alternate. Lysine 16 carries the N6-succinyllysine; alternate modification. Tyrosine 24 is modified (phosphotyrosine). Serine 35 carries the phosphoserine modification. An N6-succinyllysine modification is found at lysine 40. The residue at position 49 (serine 49) is a Phosphoserine. Histidine 58 is a binding site for O2. Residue histidine 87 participates in heme b binding. Serine 102 is subject to Phosphoserine. The residue at position 108 (threonine 108) is a Phosphothreonine. 2 positions are modified to phosphoserine: serine 124 and serine 131. A phosphothreonine mark is found at threonine 134 and threonine 137. Residue serine 138 is modified to Phosphoserine.

It belongs to the globin family. Heterotetramer of two alpha chains and two beta chains. In terms of tissue distribution, red blood cells.

Functionally, involved in oxygen transport from the lung to the various peripheral tissues. Its function is as follows. Hemopressin acts as an antagonist peptide of the cannabinoid receptor CNR1. Hemopressin-binding efficiently blocks cannabinoid receptor CNR1 and subsequent signaling. This chain is Hemoglobin subunit alpha (HBA), found in Cercocebus atys (Sooty mangabey).